Consider the following 180-residue polypeptide: Large ribosomal subunit protein uL5 (180 aa).

Belongs to the universal ribosomal protein uL5 family. As to quaternary structure, part of the 50S ribosomal subunit; part of the 5S rRNA/L5/L18/L25 subcomplex. Contacts the 5S rRNA and the P site tRNA. Forms a bridge to the 30S subunit in the 70S ribosome.

Its function is as follows. This is one of the proteins that bind and probably mediate the attachment of the 5S RNA into the large ribosomal subunit, where it forms part of the central protuberance. In the 70S ribosome it contacts protein S13 of the 30S subunit (bridge B1b), connecting the 2 subunits; this bridge is implicated in subunit movement. Contacts the P site tRNA; the 5S rRNA and some of its associated proteins might help stabilize positioning of ribosome-bound tRNAs. The protein is Large ribosomal subunit protein uL5 of Xanthomonas euvesicatoria pv. vesicatoria (strain 85-10) (Xanthomonas campestris pv. vesicatoria).